The following is a 78-amino-acid chain: Large ribosomal subunit protein bL28 (78 aa).

Belongs to the bacterial ribosomal protein bL28 family.

This chain is Large ribosomal subunit protein bL28, found in Francisella philomiragia subsp. philomiragia (strain ATCC 25017 / CCUG 19701 / FSC 153 / O#319-036).